The primary structure comprises 106 residues: DNA-directed RNA polymerase subunit omega (106 aa).

A disordered region spans residues 76 to 106 (REPAREAAEPAGEAPEEQQRAAGEREDQGAA). Residues 92 to 106 (EQQRAAGEREDQGAA) show a composition bias toward basic and acidic residues.

This sequence belongs to the RNA polymerase subunit omega family. The RNAP catalytic core consists of 2 alpha, 1 beta, 1 beta' and 1 omega subunit. When a sigma factor is associated with the core the holoenzyme is formed, which can initiate transcription.

The catalysed reaction is RNA(n) + a ribonucleoside 5'-triphosphate = RNA(n+1) + diphosphate. Promotes RNA polymerase assembly. Latches the N- and C-terminal regions of the beta' subunit thereby facilitating its interaction with the beta and alpha subunits. The protein is DNA-directed RNA polymerase subunit omega of Rubrobacter xylanophilus (strain DSM 9941 / JCM 11954 / NBRC 16129 / PRD-1).